Consider the following 679-residue polypeptide: Altered inheritance of mitochondria protein 21 (679 aa).

A disordered region spans residues 1–95 (MPSEVTPKVP…EELNNVMNNT (95 aa)). Over residues 9 to 19 (VPERPSRRKTS) the composition is skewed to basic and acidic residues. Thr18 bears the Phosphothreonine mark. Ser36 bears the Phosphoserine mark. Thr58 is subject to Phosphothreonine. At Ser70 the chain carries Phosphoserine. Thr85 is modified (phosphothreonine). Positions 86-95 (EELNNVMNNT) are enriched in polar residues. Residue Ser104 is modified to Phosphoserine. 2 disordered regions span residues 107–522 (SKHN…EKIE) and 548–679 (LMDT…FHSL). The span at 109 to 119 (HNIHSVSRKKS) shows a compositional bias: basic residues. Polar residues-rich tracts occupy residues 133 to 149 (QNGQRSASDNKTSTNPS) and 164 to 178 (SAISPSNSVNKSNNE). Over residues 179–213 (VTEHSDSEDLTEKQKVHAALDNEAGDGSHFEEKLI) the composition is skewed to basic and acidic residues. Phosphoserine is present on residues Ser183, Ser206, and Ser231. Residues 243–272 (SDDKAEKFTKHPESSLEELQKHQEQQEEKI) are compositionally biased toward basic and acidic residues. Phosphothreonine is present on Thr277. Position 284 is a phosphoserine (Ser284). A compositionally biased stretch (polar residues) spans 296 to 323 (EVNSQPQGPSDTETVIAATSSNVPSQIA). Ser324 carries the phosphoserine modification. 2 stretches are compositionally biased toward basic and acidic residues: residues 339–351 (KKDFEAHVQKEEL) and 372–383 (EESKIPKIPSER). The segment at 383-396 (RPKRRAPPPVPKKP) is interaction with SH3 domain of ABP1. 2 stretches are compositionally biased toward polar residues: residues 414–427 (DLHNNGNSSATTAS) and 437–452 (SSITSDTTKADFTSKL). Residues 471 to 482 (LEKKLSSPDTES) show a composition bias toward basic and acidic residues. Positions 483–492 (KLGTQDQSQA) are enriched in polar residues. Residues 501–512 (RRGRGPRGRKLP) show a composition bias toward basic residues. The residue at position 552 (Thr552) is a Phosphothreonine. Residues 556–576 (QAERALDEKSKSIPEEQREQS) are compositionally biased toward basic and acidic residues. Ser576 bears the Phosphoserine mark. Polar residues predominate over residues 603 to 613 (PLSQLPQTNAV). Phosphoserine is present on residues Ser620, Ser623, Ser625, Ser627, Ser667, Ser671, Ser675, and Ser678. Residues 667–679 (SALHSEEASFHSL) show a composition bias toward basic and acidic residues.

It belongs to the AIM21 family. In terms of assembly, interacts with ribosomes. Interacts with ABP1.

The protein localises to the cytoplasm. It is found in the cytoskeleton. It localises to the actin patch. Functionally, involved in mitochondrial migration along actin filaments. The protein is Altered inheritance of mitochondria protein 21 (AIM21) of Saccharomyces cerevisiae (strain YJM789) (Baker's yeast).